A 192-amino-acid polypeptide reads, in one-letter code: Protein GrpE (192 aa).

The protein belongs to the GrpE family. In terms of assembly, homodimer.

It is found in the cytoplasm. Functionally, participates actively in the response to hyperosmotic and heat shock by preventing the aggregation of stress-denatured proteins, in association with DnaK and GrpE. It is the nucleotide exchange factor for DnaK and may function as a thermosensor. Unfolded proteins bind initially to DnaJ; upon interaction with the DnaJ-bound protein, DnaK hydrolyzes its bound ATP, resulting in the formation of a stable complex. GrpE releases ADP from DnaK; ATP binding to DnaK triggers the release of the substrate protein, thus completing the reaction cycle. Several rounds of ATP-dependent interactions between DnaJ, DnaK and GrpE are required for fully efficient folding. The protein is Protein GrpE of Neisseria gonorrhoeae (strain NCCP11945).